Here is a 512-residue protein sequence, read N- to C-terminus: Apolipoprotein N-acyltransferase (512 aa).

A run of 6 helical transmembrane segments spans residues 5 to 25 (LDKYWQHPALYWPLLILFAAA), 56 to 76 (FAVSSAYLFGLTAYTTQFYWI), 92 to 112 (VPLTFLLPAYLALYPALCFWL), 118 to 138 (LPRGIKIGLVLPILWTLTEFA), 168 to 188 (FGGIHMVTLATAFLGVWLVLA), and 195 to 215 (SGKRLLPIILIAALLAAGYTA). The region spanning 233–477 (LQGNIDQTLK…ETVLEGHIKG (245 aa)) is the CN hydrolase domain. Residue Glu271 is the Proton acceptor of the active site. Residue Lys337 is part of the active site. Cys389 (nucleophile) is an active-site residue. A helical transmembrane segment spans residues 487-507 (TGSSWWLMGILTLAALILFIF).

This sequence belongs to the CN hydrolase family. Apolipoprotein N-acyltransferase subfamily.

Its subcellular location is the cell inner membrane. It catalyses the reaction N-terminal S-1,2-diacyl-sn-glyceryl-L-cysteinyl-[lipoprotein] + a glycerophospholipid = N-acyl-S-1,2-diacyl-sn-glyceryl-L-cysteinyl-[lipoprotein] + a 2-acyl-sn-glycero-3-phospholipid + H(+). The protein operates within protein modification; lipoprotein biosynthesis (N-acyl transfer). Catalyzes the phospholipid dependent N-acylation of the N-terminal cysteine of apolipoprotein, the last step in lipoprotein maturation. In Neisseria meningitidis serogroup A / serotype 4A (strain DSM 15465 / Z2491), this protein is Apolipoprotein N-acyltransferase.